Reading from the N-terminus, the 228-residue chain is 7-cyano-7-deazaguanine synthase (228 aa).

Residue 7 to 17 coordinates ATP; sequence LSGGMDSLVTT. Zn(2+) is bound by residues Cys-187, Cys-195, Cys-198, and Cys-201.

Belongs to the QueC family. Zn(2+) is required as a cofactor.

It carries out the reaction 7-carboxy-7-deazaguanine + NH4(+) + ATP = 7-cyano-7-deazaguanine + ADP + phosphate + H2O + H(+). It participates in purine metabolism; 7-cyano-7-deazaguanine biosynthesis. Its function is as follows. Catalyzes the ATP-dependent conversion of 7-carboxy-7-deazaguanine (CDG) to 7-cyano-7-deazaguanine (preQ(0)). The polypeptide is 7-cyano-7-deazaguanine synthase (Chlorobium chlorochromatii (strain CaD3)).